The sequence spans 38 residues: uncharacterized protein (38 aa).

This is an uncharacterized protein from Treponema pallidum (strain Nichols).